Consider the following 725-residue polypeptide: LPS-assembly protein LptD (725 aa).

An N-terminal signal peptide occupies residues 1-25 (MSLLSKLHLILYICLLLLPLRFVNA).

Belongs to the LptD family. In terms of assembly, component of the lipopolysaccharide transport and assembly complex. Interacts with LptE and LptA.

It localises to the cell outer membrane. Together with LptE, is involved in the assembly of lipopolysaccharide (LPS) at the surface of the outer membrane. The polypeptide is LPS-assembly protein LptD (Nitrosomonas eutropha (strain DSM 101675 / C91 / Nm57)).